Consider the following 223-residue polypeptide: Ubiquitin carboxyl-terminal hydrolase isozyme L1 (223 aa).

Met1 bears the N-acetylmethionine mark. Positions 2–221 (QLKPMEINPE…VRFSAVALCK (220 aa)) constitute a UCH catalytic domain. The interval 5 to 10 (PMEINP) is interaction with ubiquitin. Residue Cys90 is the Nucleophile of the active site. Ser125 bears the Phosphoserine mark. The Proton donor role is filled by His161. Positions 211-216 (EVRFSA) are interaction with ubiquitin. Cys220 carries S-farnesyl cysteine lipidation. A propeptide spans 221–223 (KAA) (removed in mature form).

This sequence belongs to the peptidase C12 family. Monomer. Homodimer. Interacts with COPS5 and SNCA. Post-translationally, O-glycosylated.

It is found in the cytoplasm. It localises to the endoplasmic reticulum membrane. It carries out the reaction Thiol-dependent hydrolysis of ester, thioester, amide, peptide and isopeptide bonds formed by the C-terminal Gly of ubiquitin (a 76-residue protein attached to proteins as an intracellular targeting signal).. Ubiquitin-protein hydrolase involved both in the processing of ubiquitin precursors and of ubiquitinated proteins. This enzyme is a thiol protease that recognizes and hydrolyzes a peptide bond at the C-terminal glycine of ubiquitin. Also binds to free monoubiquitin and may prevent its degradation in lysosomes. The homodimer may have ATP-independent ubiquitin ligase activity. The sequence is that of Ubiquitin carboxyl-terminal hydrolase isozyme L1 (UCHL1) from Sus scrofa (Pig).